Reading from the N-terminus, the 147-residue chain is D-aminoacyl-tRNA deacylase (147 aa).

The Gly-cisPro motif, important for rejection of L-amino acids signature appears at 137–138 (GP).

The protein belongs to the DTD family. In terms of assembly, homodimer.

It localises to the cytoplasm. The catalysed reaction is glycyl-tRNA(Ala) + H2O = tRNA(Ala) + glycine + H(+). It catalyses the reaction a D-aminoacyl-tRNA + H2O = a tRNA + a D-alpha-amino acid + H(+). An aminoacyl-tRNA editing enzyme that deacylates mischarged D-aminoacyl-tRNAs. Also deacylates mischarged glycyl-tRNA(Ala), protecting cells against glycine mischarging by AlaRS. Acts via tRNA-based rather than protein-based catalysis; rejects L-amino acids rather than detecting D-amino acids in the active site. By recycling D-aminoacyl-tRNA to D-amino acids and free tRNA molecules, this enzyme counteracts the toxicity associated with the formation of D-aminoacyl-tRNA entities in vivo and helps enforce protein L-homochirality. The protein is D-aminoacyl-tRNA deacylase of Acinetobacter baumannii (strain ATCC 17978 / DSM 105126 / CIP 53.77 / LMG 1025 / NCDC KC755 / 5377).